Consider the following 80-residue polypeptide: UPF0248 protein MJ1316 (80 aa).

Belongs to the UPF0248 family.

The polypeptide is UPF0248 protein MJ1316 (Methanocaldococcus jannaschii (strain ATCC 43067 / DSM 2661 / JAL-1 / JCM 10045 / NBRC 100440) (Methanococcus jannaschii)).